A 193-amino-acid chain; its full sequence is ATP-dependent protease subunit HslV (193 aa).

Threonine 12 is an active-site residue. Residues alanine 167, cysteine 170, and threonine 173 each coordinate Na(+).

It belongs to the peptidase T1B family. HslV subfamily. In terms of assembly, a double ring-shaped homohexamer of HslV is capped on each side by a ring-shaped HslU homohexamer. The assembly of the HslU/HslV complex is dependent on binding of ATP.

The protein resides in the cytoplasm. It catalyses the reaction ATP-dependent cleavage of peptide bonds with broad specificity.. With respect to regulation, allosterically activated by HslU binding. Protease subunit of a proteasome-like degradation complex believed to be a general protein degrading machinery. This is ATP-dependent protease subunit HslV from Bartonella henselae (strain ATCC 49882 / DSM 28221 / CCUG 30454 / Houston 1) (Rochalimaea henselae).